A 595-amino-acid chain; its full sequence is Pentatricopeptide repeat-containing protein At4g21065 (595 aa).

PPR repeat units follow at residues 84–118 (NVFI…GLVE), 120–154 (DTHT…GFGS), 155–185 (LIYV…MPEK), 186–220 (DLVA…GIKP), 221–255 (DGFT…GLTR), 256–290 (NLHS…NSVS), 291–317 (WTSL…MEST), 323–353 (CEIT…MREE), and 359–389 (RIEH…MPMQ). The interval 394–469 (IWRTLLGACT…VPGHSLVEVG (76 aa)) is type E motif. The type E(+) motif stretch occupies residues 470–500 (NRVHEFLMGDKSHPQSDAIYAKLKEMTGRLR). The interval 501 to 595 (SEGYVPQISN…NGSCSCQDYW (95 aa)) is type DYW motif.

Belongs to the PPR family. PCMP-H subfamily.

In Arabidopsis thaliana (Mouse-ear cress), this protein is Pentatricopeptide repeat-containing protein At4g21065 (PCMP-H28).